Here is a 495-residue protein sequence, read N- to C-terminus: Glycerol kinase (495 aa).

T11 contacts ADP. Residues T11, T12, and S13 each contribute to the ATP site. Sn-glycerol 3-phosphate is bound at residue T11. ADP is bound at residue R15. Residues R81, E82, Y133, and D242 each coordinate sn-glycerol 3-phosphate. Glycerol-binding residues include R81, E82, Y133, D242, and Q243. The ADP site is built by T264 and G307. Residues T264, G307, Q311, and G408 each contribute to the ATP site. 2 residues coordinate ADP: G408 and N412.

The protein belongs to the FGGY kinase family.

The enzyme catalyses glycerol + ATP = sn-glycerol 3-phosphate + ADP + H(+). It participates in polyol metabolism; glycerol degradation via glycerol kinase pathway; sn-glycerol 3-phosphate from glycerol: step 1/1. With respect to regulation, inhibited by fructose 1,6-bisphosphate (FBP). In terms of biological role, key enzyme in the regulation of glycerol uptake and metabolism. Catalyzes the phosphorylation of glycerol to yield sn-glycerol 3-phosphate. The sequence is that of Glycerol kinase from Alkalilimnicola ehrlichii (strain ATCC BAA-1101 / DSM 17681 / MLHE-1).